We begin with the raw amino-acid sequence, 431 residues long: Adenylosuccinate synthetase (431 aa).

GTP is bound by residues 12–18 (GDEGKGK) and 40–42 (GHT). The Proton acceptor role is filled by D13. Mg(2+) contacts are provided by D13 and G40. IMP contacts are provided by residues 13–16 (DEGK), 38–41 (NAGH), T130, R144, Q225, T240, and R304. H41 functions as the Proton donor in the catalytic mechanism. Residue 300–306 (ATTGRPR) participates in substrate binding. GTP is bound by residues R306, 332–334 (KLD), and 414–416 (SVG).

It belongs to the adenylosuccinate synthetase family. In terms of assembly, homodimer. It depends on Mg(2+) as a cofactor.

The protein localises to the cytoplasm. It catalyses the reaction IMP + L-aspartate + GTP = N(6)-(1,2-dicarboxyethyl)-AMP + GDP + phosphate + 2 H(+). It functions in the pathway purine metabolism; AMP biosynthesis via de novo pathway; AMP from IMP: step 1/2. Plays an important role in the de novo pathway of purine nucleotide biosynthesis. Catalyzes the first committed step in the biosynthesis of AMP from IMP. The chain is Adenylosuccinate synthetase from Geotalea uraniireducens (strain Rf4) (Geobacter uraniireducens).